Reading from the N-terminus, the 386-residue chain is Ferrochelatase (386 aa).

The Fe cation site is built by His196 and Glu277.

The protein belongs to the ferrochelatase family.

The protein resides in the cytoplasm. It carries out the reaction heme b + 2 H(+) = protoporphyrin IX + Fe(2+). It participates in porphyrin-containing compound metabolism; protoheme biosynthesis; protoheme from protoporphyrin-IX: step 1/1. Catalyzes the ferrous insertion into protoporphyrin IX. The sequence is that of Ferrochelatase from Picosynechococcus sp. (strain ATCC 27264 / PCC 7002 / PR-6) (Agmenellum quadruplicatum).